Reading from the N-terminus, the 115-residue chain is Large ribosomal subunit protein bL20 (115 aa).

The protein belongs to the bacterial ribosomal protein bL20 family.

In terms of biological role, binds directly to 23S ribosomal RNA and is necessary for the in vitro assembly process of the 50S ribosomal subunit. It is not involved in the protein synthesizing functions of that subunit. This is Large ribosomal subunit protein bL20 from Synechococcus sp. (strain CC9605).